Here is a 511-residue protein sequence, read N- to C-terminus: Cytochrome P450 monooxygenase PUL2 (511 aa).

The helical transmembrane segment at W14–W34 threads the bilayer. N-linked (GlcNAc...) asparagine glycans are attached at residues N116, N141, and N442. C462 lines the heme pocket.

Belongs to the cytochrome P450 family. Heme is required as a cofactor.

The protein localises to the membrane. It functions in the pathway siderophore biosynthesis. In terms of biological role, cytochrome P450 monooxygenase; part of the PUL gene cluster that mediates the formation of pulcherrimin, a red iron-containing pigment composed of two cyclized and modified leucine molecules that acts as a siderophore, a chelator that binds iron outside the cell for subsequent uptake. Two leucine molecules are cyclized via a cyclodipeptide synthase, and the resulting diketopiperazine is oxidized by a cytochrome P450 monooxygenase to generate pulcherriminic acid (PA), which can then spontaneously bind iron to form pulcherrimin. The probable cyclodipeptide synthase PUL1 and the cytochrome P450 monooxygenase PUL2 encode the enzymes responsible for the two-step pulcherrimin biosynthesis pathway. This chain is Cytochrome P450 monooxygenase PUL2, found in Kluyveromyces lactis (strain ATCC 8585 / CBS 2359 / DSM 70799 / NBRC 1267 / NRRL Y-1140 / WM37) (Yeast).